The primary structure comprises 271 residues: Inactive phospholipid phosphatase 7 (271 aa).

The tract at residues 1 to 69 is disordered; sequence MPVSQSRARA…RQSQQLPEED (69 aa). The Cytoplasmic portion of the chain corresponds to 1–112; the sequence is MPVSQSRARA…AASWASARSM (112 aa). The span at 24 to 36 shows a compositional bias: polar residues; that stretch reads SLNQPPKGTQEPR. Phosphoserine is present on residues Ser-43 and Ser-62. The interaction with MTOR stretch occupies residues 70-91; the sequence is CMQLNPSFKGIAFNSLLAIDIC. The chain crosses the membrane as a helical span at residues 113-133; sequence VKLIGITSHGIPWIGGTILCL. The Extracellular segment spans residues 134–141; it reads VRSSTLAG. Residues 142–162 traverse the membrane as a helical segment; it reads QEVLMNLLLALLLDIMTVAGV. Topologically, residues 163–202 are cytoplasmic; that stretch reads QKLIKRRGPYETSPGLLDYLTMDIYAFPAGHASRAAMVSK. Residues 203 to 223 traverse the membrane as a helical segment; sequence FFLSHLVLAVPLRVLLVLWAF. Residues 224–239 lie on the Extracellular side of the membrane; that stretch reads CVGLSRVMIGRHHITD. The chain crosses the membrane as a helical span at residues 240-260; that stretch reads VISGFIIGYFQFRLVELVWMS. The Cytoplasmic portion of the chain corresponds to 261-271; the sequence is SNTCQMLISAW.

This sequence belongs to the PA-phosphatase related phosphoesterase family. In terms of assembly, homo- and heterooligomer. Interacts with MTOR; controls MTOR-dependent IGF2 expression during myoblast differentiation.

It is found in the nucleus envelope. It localises to the endoplasmic reticulum membrane. The protein resides in the membrane. Its function is as follows. Plays a role as negative regulator of myoblast differentiation, in part through effects on MTOR signaling. Has no detectable enzymatic activity. This is Inactive phospholipid phosphatase 7 from Rattus norvegicus (Rat).